The sequence spans 114 residues: Putative membrane protein insertion efficiency factor (114 aa).

This sequence belongs to the UPF0161 family.

It is found in the cell inner membrane. Could be involved in insertion of integral membrane proteins into the membrane. This chain is Putative membrane protein insertion efficiency factor, found in Nitrobacter hamburgensis (strain DSM 10229 / NCIMB 13809 / X14).